Here is a 149-residue protein sequence, read N- to C-terminus: MAEQLTEEQIAEFKEAFSLFDKDGDGCITTKELGTVMRSLGQNPTEAELQDMISEVDADQNGTIDFPEFLNLMARKMKDTDSEEELKEAFKVFDKDQNGYISAADVRHVMTNLGEKLTDEEVDEMIREADMDGDGQVNYEEFVRMMLAK.

At alanine 2 the chain carries N-acetylalanine. EF-hand domains lie at glutamate 8–asparagine 43, proline 44–aspartate 79, aspartate 81–lysine 116, and leucine 117–lysine 149. Residues aspartate 21, aspartate 23, aspartate 25, cysteine 27, glutamate 32, aspartate 57, aspartate 59, asparagine 61, threonine 63, glutamate 68, aspartate 94, aspartate 96, asparagine 98, tyrosine 100, and aspartate 105 each coordinate Ca(2+). Position 116 is an N6,N6,N6-trimethyllysine (lysine 116). Ca(2+)-binding residues include aspartate 130, aspartate 132, aspartate 134, glutamine 136, and glutamate 141.

This sequence belongs to the calmodulin family.

In terms of biological role, calmodulin mediates the control of a large number of enzymes, ion channels and other proteins by Ca(2+). Among the enzymes to be stimulated by the calmodulin-Ca(2+) complex are a number of protein kinases and phosphatases. The protein is Calmodulin-2 (CAM72) of Petunia hybrida (Petunia).